The chain runs to 886 residues: DNA mismatch repair protein MutS (886 aa).

641–648 (GPNMAGKS) serves as a coordination point for ATP.

Belongs to the DNA mismatch repair MutS family.

Its function is as follows. This protein is involved in the repair of mismatches in DNA. It is possible that it carries out the mismatch recognition step. This protein has a weak ATPase activity. The protein is DNA mismatch repair protein MutS of Rickettsia rickettsii (strain Sheila Smith).